Consider the following 414-residue polypeptide: uncharacterized protein (414 aa).

An N-terminal signal peptide occupies residues 1–16 (MRVILLLAFLISLTEC). Positions 20–59 (SEDLALYDLVEEVGVNFYEWFDIPRDASSNQVKKAYRKLT) constitute a Myb-like 1 domain. Residues 35–99 (NFYEWFDIPR…ELREKYDNVL (65 aa)) enclose the J domain. A helical membrane pass occupies residues 125-145 (ILVLLFIGTIAHYLMMWAAYF). Positions 211 to 234 (MTPKEVEPEEPTEEELAQQRRQQR) are disordered. Residues 217 to 226 (EPEEPTEEEL) are compositionally biased toward acidic residues. One can recognise a Myb-like 2 domain in the interval 274–320 (AQKQSGATWTPDELASLVRLSTEKYPAGTPNRWEQMGRVLNRSAEDV). Residues 352-407 (KSEDDWSQAEQKAFETALQKYPKGTDERWERISEEIGSKTKKQVMVRFKQLAEMIR) enclose the SANT domain.

The protein localises to the nucleus membrane. This is an uncharacterized protein from Caenorhabditis elegans.